The sequence spans 167 residues: Small ribosomal subunit protein uS5 (167 aa).

Residues 12–75 (LQEKLVAVNR…EKARRNIVSV (64 aa)) form the S5 DRBM domain.

It belongs to the universal ribosomal protein uS5 family. In terms of assembly, part of the 30S ribosomal subunit. Contacts proteins S4 and S8.

Its function is as follows. With S4 and S12 plays an important role in translational accuracy. In terms of biological role, located at the back of the 30S subunit body where it stabilizes the conformation of the head with respect to the body. The chain is Small ribosomal subunit protein uS5 from Shewanella loihica (strain ATCC BAA-1088 / PV-4).